The sequence spans 178 residues: Large ribosomal subunit protein uL5 (178 aa).

The protein belongs to the universal ribosomal protein uL5 family. As to quaternary structure, part of the 50S ribosomal subunit; contacts the 5S rRNA and probably tRNA. Forms a bridge to the 30S subunit in the 70S ribosome.

Its function is as follows. This is one of the proteins that bind and probably mediate the attachment of the 5S RNA into the large ribosomal subunit, where it forms part of the central protuberance. In the 70S ribosome it contacts protein S13 of the 30S subunit (bridge B1b), connecting the 2 subunits; this bridge is implicated in subunit movement. May contact the P site tRNA; the 5S rRNA and some of its associated proteins might help stabilize positioning of ribosome-bound tRNAs. The polypeptide is Large ribosomal subunit protein uL5 (Archaeoglobus fulgidus (strain ATCC 49558 / DSM 4304 / JCM 9628 / NBRC 100126 / VC-16)).